A 252-amino-acid chain; its full sequence is Imidazole glycerol phosphate synthase subunit HisF (252 aa).

Catalysis depends on residues Asp13 and Asp132.

This sequence belongs to the HisA/HisF family. As to quaternary structure, heterodimer of HisH and HisF.

It localises to the cytoplasm. It catalyses the reaction 5-[(5-phospho-1-deoxy-D-ribulos-1-ylimino)methylamino]-1-(5-phospho-beta-D-ribosyl)imidazole-4-carboxamide + L-glutamine = D-erythro-1-(imidazol-4-yl)glycerol 3-phosphate + 5-amino-1-(5-phospho-beta-D-ribosyl)imidazole-4-carboxamide + L-glutamate + H(+). It functions in the pathway amino-acid biosynthesis; L-histidine biosynthesis; L-histidine from 5-phospho-alpha-D-ribose 1-diphosphate: step 5/9. In terms of biological role, IGPS catalyzes the conversion of PRFAR and glutamine to IGP, AICAR and glutamate. The HisF subunit catalyzes the cyclization activity that produces IGP and AICAR from PRFAR using the ammonia provided by the HisH subunit. The chain is Imidazole glycerol phosphate synthase subunit HisF from Campylobacter curvus (strain 525.92).